Consider the following 390-residue polypeptide: Nicotinate phosphoribosyltransferase (390 aa).

The residue at position 211 (histidine 211) is a Phosphohistidine; by autocatalysis.

It belongs to the NAPRTase family. Transiently phosphorylated on a His residue during the reaction cycle. Phosphorylation strongly increases the affinity for substrates and increases the rate of nicotinate D-ribonucleotide production. Dephosphorylation regenerates the low-affinity form of the enzyme, leading to product release.

The catalysed reaction is nicotinate + 5-phospho-alpha-D-ribose 1-diphosphate + ATP + H2O = nicotinate beta-D-ribonucleotide + ADP + phosphate + diphosphate. It participates in cofactor biosynthesis; NAD(+) biosynthesis; nicotinate D-ribonucleotide from nicotinate: step 1/1. Functionally, catalyzes the synthesis of beta-nicotinate D-ribonucleotide from nicotinate and 5-phospho-D-ribose 1-phosphate at the expense of ATP. In Chromohalobacter salexigens (strain ATCC BAA-138 / DSM 3043 / CIP 106854 / NCIMB 13768 / 1H11), this protein is Nicotinate phosphoribosyltransferase.